Consider the following 65-residue polypeptide: Large ribosomal subunit protein uL29 (65 aa).

It belongs to the universal ribosomal protein uL29 family.

The sequence is that of Large ribosomal subunit protein uL29 from Parabacteroides distasonis (strain ATCC 8503 / DSM 20701 / CIP 104284 / JCM 5825 / NCTC 11152).